A 200-amino-acid polypeptide reads, in one-letter code: Intraflagellar transport protein 43 homolog (200 aa).

Disordered regions lie at residues 56-76 (KTGKSQRKTDDDDSQETIAAP) and 175-200 (ERIDAKDQPSDSRSRNARETLISSKY). Residues 175–192 (ERIDAKDQPSDSRSRNAR) show a composition bias toward basic and acidic residues.

Belongs to the IFT43 family. In terms of assembly, component of the IFT complex A (IFT-A) composed of at least che-11, daf-10, dyf-2, ift-139, ift-43 and ifta-1. In terms of tissue distribution, expressed in ciliated sensory neurons.

It is found in the cell projection. It localises to the cilium. Functionally, as a component of IFT complex A (IFT-A), a complex required for retrograde ciliary transport and entry into cilia of G protein-coupled receptors (GPCRs), it is involved in ciliogenesis. In particular, may act redundantly with the intraflagellar transport protein ift-139 to regulate the transport of specific ciliary cargo proteins such as che-3 which are related to motility. The polypeptide is Intraflagellar transport protein 43 homolog (Caenorhabditis elegans).